The chain runs to 558 residues: Arginine--tRNA ligase (558 aa).

The 'HIGH' region motif lies at 119–129; sequence ANPNGPLHVGH.

Belongs to the class-I aminoacyl-tRNA synthetase family.

The protein resides in the cytoplasm. The enzyme catalyses tRNA(Arg) + L-arginine + ATP = L-arginyl-tRNA(Arg) + AMP + diphosphate. The sequence is that of Arginine--tRNA ligase from Methanoregula boonei (strain DSM 21154 / JCM 14090 / 6A8).